The primary structure comprises 461 residues: Methylenetetrahydrofolate--tRNA-(uracil-5-)-methyltransferase TrmFO (461 aa).

16-21 (GAGLAG) lines the FAD pocket.

Belongs to the MnmG family. TrmFO subfamily. Requires FAD as cofactor.

The protein resides in the cytoplasm. It carries out the reaction uridine(54) in tRNA + (6R)-5,10-methylene-5,6,7,8-tetrahydrofolate + NADH + H(+) = 5-methyluridine(54) in tRNA + (6S)-5,6,7,8-tetrahydrofolate + NAD(+). The enzyme catalyses uridine(54) in tRNA + (6R)-5,10-methylene-5,6,7,8-tetrahydrofolate + NADPH + H(+) = 5-methyluridine(54) in tRNA + (6S)-5,6,7,8-tetrahydrofolate + NADP(+). Functionally, catalyzes the folate-dependent formation of 5-methyl-uridine at position 54 (M-5-U54) in all tRNAs. This Parasynechococcus marenigrum (strain WH8102) protein is Methylenetetrahydrofolate--tRNA-(uracil-5-)-methyltransferase TrmFO.